We begin with the raw amino-acid sequence, 190 residues long: Orotate phosphoribosyltransferase (190 aa).

Position 114-122 (114-122 (EDVVTTGGS)) interacts with 5-phospho-alpha-D-ribose 1-diphosphate. 2 residues coordinate orotate: Thr-118 and Arg-146.

This sequence belongs to the purine/pyrimidine phosphoribosyltransferase family. PyrE subfamily. Homodimer. It depends on Mg(2+) as a cofactor.

The enzyme catalyses orotidine 5'-phosphate + diphosphate = orotate + 5-phospho-alpha-D-ribose 1-diphosphate. It participates in pyrimidine metabolism; UMP biosynthesis via de novo pathway; UMP from orotate: step 1/2. Catalyzes the transfer of a ribosyl phosphate group from 5-phosphoribose 1-diphosphate to orotate, leading to the formation of orotidine monophosphate (OMP). In Thermoanaerobacter sp. (strain X514), this protein is Orotate phosphoribosyltransferase.